Consider the following 20-residue polypeptide: ATDYEDEEFPGAVPPSVGAR.

The interval 1-20 is disordered; it reads ATDYEDEEFPGAVPPSVGAR. Thr-2 is a glycosylation site (O-linked (GalNAc...) threonine). Residue Tyr-4 is modified to Sulfotyrosine.

In terms of assembly, heterohexamer; disulfide linked. Contains 2 sets of 3 non-identical chains (alpha, beta and gamma). The 2 heterotrimers are in head to head conformation with the N-termini in a small central domain. Post-translationally, conversion of fibrinogen to fibrin is triggered by thrombin, which cleaves fibrinopeptides A and B from alpha and beta chains, and thus exposes the N-terminal polymerization sites responsible for the formation of the soft clot.

The protein localises to the secreted. In terms of biological role, cleaved by the protease thrombin to yield monomers which, together with fibrinogen alpha (FGA) and fibrinogen gamma (FGG), polymerize to form an insoluble fibrin matrix. Fibrin has a major function in hemostasis as one of the primary components of blood clots. In addition, functions during the early stages of wound repair to stabilize the lesion and guide cell migration during re-epithelialization. Was originally thought to be essential for platelet aggregation, based on in vitro studies using anticoagulated blood. However subsequent studies have shown that it is not absolutely required for thrombus formation in vivo. Enhances expression of SELP in activated platelets. Maternal fibrinogen is essential for successful pregnancy. Fibrin deposition is also associated with infection, where it protects against IFNG-mediated hemorrhage. May also facilitate the antibacterial immune response via both innate and T-cell mediated pathways. In Elephas maximus (Indian elephant), this protein is Fibrinogen beta chain (FGB).